The primary structure comprises 200 residues: Dephospho-CoA kinase (200 aa).

The DPCK domain occupies 2–200; it reads LIAVVGKAGV…CHHGHYQTPK (199 aa). 10–15 provides a ligand contact to ATP; it reads GVGKTT.

The protein belongs to the CoaE family.

The protein resides in the cytoplasm. The enzyme catalyses 3'-dephospho-CoA + ATP = ADP + CoA + H(+). The protein operates within cofactor biosynthesis; coenzyme A biosynthesis; CoA from (R)-pantothenate: step 5/5. Functionally, catalyzes the phosphorylation of the 3'-hydroxyl group of dephosphocoenzyme A to form coenzyme A. The protein is Dephospho-CoA kinase of Mycoplasma pneumoniae (strain ATCC 29342 / M129 / Subtype 1) (Mycoplasmoides pneumoniae).